A 124-amino-acid chain; its full sequence is Acidic phospholipase A2 A (124 aa).

Intrachain disulfides connect cysteine 26–cysteine 116, cysteine 28–cysteine 44, cysteine 43–cysteine 95, cysteine 49–cysteine 124, cysteine 50–cysteine 88, cysteine 57–cysteine 81, and cysteine 75–cysteine 86. Residues tyrosine 27, glycine 29, and glycine 31 each coordinate Ca(2+). Histidine 47 is a catalytic residue. Ca(2+) is bound at residue aspartate 48. Residue aspartate 89 is part of the active site.

Belongs to the phospholipase A2 family. Group II subfamily. D49 sub-subfamily. Requires Ca(2+) as cofactor. Expressed by the venom gland.

The protein resides in the secreted. The catalysed reaction is a 1,2-diacyl-sn-glycero-3-phosphocholine + H2O = a 1-acyl-sn-glycero-3-phosphocholine + a fatty acid + H(+). PLA2 catalyzes the calcium-dependent hydrolysis of the 2-acyl groups in 3-sn-phosphoglycerides. This chain is Acidic phospholipase A2 A, found in Gloydius halys (Chinese water mocassin).